We begin with the raw amino-acid sequence, 222 residues long: Adapter protein MecA (222 aa).

Belongs to the MecA family. In terms of assembly, homodimer.

Enables the recognition and targeting of unfolded and aggregated proteins to the ClpC protease or to other proteins involved in proteolysis. This is Adapter protein MecA from Lysinibacillus sphaericus (strain C3-41).